We begin with the raw amino-acid sequence, 263 residues long: MLTITAIKAFNDNYIWVLQQQPHTQVYVVDPGDASVVIDYLEANQLTLVGILLTHHHNDHTGGVAELQAYSQDRLTVYGPDNEKIEGITHPLHATAQPRFTLDYISGELQVLDVPGHTAGHIAYVIADALFCGDTLFSGGCGRLFEGTPAQMLNSLQQLAQLPAYTRVYCAHEYTLSNLKFALAVNPNNCALQDYNERAIALRRQDKATIPSTIALERAINPFLRASDTEIVGSIKQHFSDLSHANLDELGGFTLLRQWKDNF.

Histidine 55, histidine 57, aspartate 59, histidine 60, histidine 117, aspartate 134, and histidine 172 together coordinate Zn(2+).

The protein belongs to the metallo-beta-lactamase superfamily. Glyoxalase II family. In terms of assembly, monomer. Zn(2+) is required as a cofactor.

The enzyme catalyses an S-(2-hydroxyacyl)glutathione + H2O = a 2-hydroxy carboxylate + glutathione + H(+). It functions in the pathway secondary metabolite metabolism; methylglyoxal degradation; (R)-lactate from methylglyoxal: step 2/2. Its function is as follows. Thiolesterase that catalyzes the hydrolysis of S-D-lactoyl-glutathione to form glutathione and D-lactic acid. The polypeptide is Hydroxyacylglutathione hydrolase (Shewanella baltica (strain OS195)).